The primary structure comprises 292 residues: Tetratricopeptide repeat protein 1 (292 aa).

The interval T23–E125 is disordered. Basic and acidic residues-rich tracts occupy residues L45–E55 and G75–E85. S83 and S90 each carry phosphoserine. The segment covering E99–E125 has biased composition (basic and acidic residues). 3 TPR repeats span residues S116 to C149, S155 to Y188, and I189 to I222.

Interacts with the GAP domain of NF1. Interacts (via TPR repeats) with HSP90AA1 and HSPA8.

The sequence is that of Tetratricopeptide repeat protein 1 (TTC1) from Homo sapiens (Human).